Reading from the N-terminus, the 219-residue chain is 2-phospho-L-lactate guanylyltransferase (219 aa).

This sequence belongs to the CofC family. Homodimer.

It catalyses the reaction (2S)-2-phospholactate + GTP + H(+) = (2S)-lactyl-2-diphospho-5'-guanosine + diphosphate. Its pathway is cofactor biosynthesis; coenzyme F420 biosynthesis. Guanylyltransferase that catalyzes the activation of (2S)-2-phospholactate (2-PL) as (2S)-lactyl-2-diphospho-5'-guanosine, via the condensation of 2-PL with GTP. It is involved in the biosynthesis of coenzyme F420, a hydride carrier cofactor. This Methanocaldococcus vulcanius (strain ATCC 700851 / DSM 12094 / M7) (Methanococcus vulcanius) protein is 2-phospho-L-lactate guanylyltransferase.